A 105-amino-acid chain; its full sequence is Heat shock protein HspQ (105 aa).

A disordered region spans residues 77-105 (MRDEHPEQPSMDELARTIRKQLQAPRLRN).

This sequence belongs to the HspQ family.

It is found in the cytoplasm. Its function is as follows. Involved in the degradation of certain denaturated proteins, including DnaA, during heat shock stress. The polypeptide is Heat shock protein HspQ (Salmonella arizonae (strain ATCC BAA-731 / CDC346-86 / RSK2980)).